A 155-amino-acid polypeptide reads, in one-letter code: Ribosomal RNA large subunit methyltransferase H (155 aa).

Residues L72, G103, and 122–127 contribute to the S-adenosyl-L-methionine site; that span reads LSKLTM.

It belongs to the RNA methyltransferase RlmH family. Homodimer.

The protein localises to the cytoplasm. The catalysed reaction is pseudouridine(1915) in 23S rRNA + S-adenosyl-L-methionine = N(3)-methylpseudouridine(1915) in 23S rRNA + S-adenosyl-L-homocysteine + H(+). Its function is as follows. Specifically methylates the pseudouridine at position 1915 (m3Psi1915) in 23S rRNA. This chain is Ribosomal RNA large subunit methyltransferase H, found in Methylobacillus flagellatus (strain ATCC 51484 / DSM 6875 / VKM B-1610 / KT).